A 376-amino-acid chain; its full sequence is Chaperone protein DnaJ (376 aa).

In terms of domain architecture, J spans 5 to 70 (DFYEVLGVGR…DKKAAYDQFG (66 aa)). Residues 132-210 (GLTKELRIPT…CHGEGRVEKS (79 aa)) form a CR-type zinc finger. Residues Cys-145, Cys-148, Cys-162, Cys-165, Cys-184, Cys-187, Cys-198, and Cys-201 each coordinate Zn(2+). CXXCXGXG motif repeat units follow at residues 145-152 (CDACDGSG), 162-169 (CGTCHGQG), 184-191 (CPTCHGRG), and 198-205 (CNKCHGEG).

It belongs to the DnaJ family. In terms of assembly, homodimer. The cofactor is Zn(2+).

The protein localises to the cytoplasm. In terms of biological role, participates actively in the response to hyperosmotic and heat shock by preventing the aggregation of stress-denatured proteins and by disaggregating proteins, also in an autonomous, DnaK-independent fashion. Unfolded proteins bind initially to DnaJ; upon interaction with the DnaJ-bound protein, DnaK hydrolyzes its bound ATP, resulting in the formation of a stable complex. GrpE releases ADP from DnaK; ATP binding to DnaK triggers the release of the substrate protein, thus completing the reaction cycle. Several rounds of ATP-dependent interactions between DnaJ, DnaK and GrpE are required for fully efficient folding. Also involved, together with DnaK and GrpE, in the DNA replication of plasmids through activation of initiation proteins. The sequence is that of Chaperone protein DnaJ from Shewanella halifaxensis (strain HAW-EB4).